Here is a 97-residue protein sequence, read N- to C-terminus: uncharacterized protein (97 aa).

Disordered regions lie at residues 1–20 and 52–97; these read MTEG…IASD and VPAA…GRRA.

This is an uncharacterized protein from Paracoccus pantotrophus (Thiosphaera pantotropha).